We begin with the raw amino-acid sequence, 264 residues long: Thymidylate synthase (264 aa).

Arg-21 serves as a coordination point for dUMP. His-51 lines the (6R)-5,10-methylene-5,6,7,8-tetrahydrofolate pocket. Residue 126-127 (RR) coordinates dUMP. The active-site Nucleophile is Cys-146. DUMP is bound by residues 166–169 (RSAD), Asn-177, and 207–209 (HIY). Asp-169 serves as a coordination point for (6R)-5,10-methylene-5,6,7,8-tetrahydrofolate. (6R)-5,10-methylene-5,6,7,8-tetrahydrofolate is bound at residue Ala-263.

Belongs to the thymidylate synthase family. Bacterial-type ThyA subfamily. Homodimer.

It is found in the cytoplasm. It catalyses the reaction dUMP + (6R)-5,10-methylene-5,6,7,8-tetrahydrofolate = 7,8-dihydrofolate + dTMP. It participates in pyrimidine metabolism; dTTP biosynthesis. In terms of biological role, catalyzes the reductive methylation of 2'-deoxyuridine-5'-monophosphate (dUMP) to 2'-deoxythymidine-5'-monophosphate (dTMP) while utilizing 5,10-methylenetetrahydrofolate (mTHF) as the methyl donor and reductant in the reaction, yielding dihydrofolate (DHF) as a by-product. This enzymatic reaction provides an intracellular de novo source of dTMP, an essential precursor for DNA biosynthesis. This is Thymidylate synthase from Ruthia magnifica subsp. Calyptogena magnifica.